The following is a 122-amino-acid chain: Ribonuclease P protein component (122 aa).

It belongs to the RnpA family. Consists of a catalytic RNA component (M1 or rnpB) and a protein subunit.

It catalyses the reaction Endonucleolytic cleavage of RNA, removing 5'-extranucleotides from tRNA precursor.. In terms of biological role, RNaseP catalyzes the removal of the 5'-leader sequence from pre-tRNA to produce the mature 5'-terminus. It can also cleave other RNA substrates such as 4.5S RNA. The protein component plays an auxiliary but essential role in vivo by binding to the 5'-leader sequence and broadening the substrate specificity of the ribozyme. The protein is Ribonuclease P protein component of Synechococcus elongatus (strain ATCC 33912 / PCC 7942 / FACHB-805) (Anacystis nidulans R2).